A 1117-amino-acid polypeptide reads, in one-letter code: PR domain zinc finger protein 10 (1117 aa).

A disordered region spans residues 97 to 142 (QQTPLGGLEAKEEEDEDEDEDTEEDEEEDGEDADLDDWEPDPPRPF). Positions 107-136 (KEEEDEDEDEDTEEDEEEDGEDADLDDWEP) are enriched in acidic residues. Residues 182-300 (LPLVLYIDRF…PKQELKVWYA (119 aa)) form the SET domain. Residues 201–305 (IPKRTQLGPV…KVWYAASYAE (105 aa)) form an N-terminal PR domain; essential for transcriptional activator activity region. The C2H2-type 1 zinc-finger motif lies at 329–351 (WPCYECNRRFISSEQLQQHLNSH). Lysine 354 is covalently cross-linked (Glycyl lysine isopeptide (Lys-Gly) (interchain with G-Cter in SUMO2)). The span at 361–381 (TRGRGRGRGKRRFGPGRRPGR) shows a compositional bias: basic residues. Residues 361–386 (TRGRGRGRGKRRFGPGRRPGRPPKFI) are disordered. Position 398 is a phosphoserine (serine 398). A Phosphothreonine modification is found at threonine 402. Residues 440 to 474 (QETQSSLEHEPETHTLHLQPQHEESVVPTQSTLTA) are disordered. Positions 446 to 464 (LEHEPETHTLHLQPQHEES) are enriched in basic and acidic residues. 9 C2H2-type zinc fingers span residues 500-522 (FKCLQCGKAFREKDKLDQHLRFH), 530-552 (LTCDLCNKGFISSASLESHMKLH), 558-580 (YSCIFCPESFDRLDLLKDHVAIH), 586-609 (FTCPTCKKRFPDFIQVKKHVRSFH), 614-636 (YQCTECDKAFCRPDKLRLHMLRH), 642-665 (FLCSTCGKQFKRKDKLREHMQRMH), 697-720 (FKCRLCMMGFRRRGMLVNHLSKRH), 742-765 (YFCQYCDKVYKSASKRKAHILKNH), and 804-827 (VCCPHCSKQYSSKTKMVQHIRKKH). The segment at 871 to 1097 (QAMTELSQTL…QTTSQQQTTQ (227 aa)) is C-terminal glutamine-rich region; essential for transcriptional activator activity. Disordered regions lie at residues 919–943 (VAPATSPHQSQQSTVDVGQLHDPQP), 958–1001 (GQPL…SSVQ), and 1066–1094 (QTSALSGGVQVQPPAHSDSLDPQTTSQQQ). Residues 924-934 (SPHQSQQSTVD) show a composition bias toward polar residues.

The protein belongs to the class V-like SAM-binding methyltransferase superfamily.

The protein resides in the nucleus. Its function is as follows. Transcriptional activator, essential for early embryonic development and survival of embryonic stem cells (ESCs). Supports cell growth and survival during early development by transcriptionally activating the expression of the translation initiation factor EIF3B, to sustain global translation. Activates the transcription of FLNC. The protein is PR domain zinc finger protein 10 (PRDM10) of Pongo abelii (Sumatran orangutan).